The chain runs to 188 residues: Elongation factor P 1 (188 aa).

It belongs to the elongation factor P family.

The protein localises to the cytoplasm. It functions in the pathway protein biosynthesis; polypeptide chain elongation. Functionally, involved in peptide bond synthesis. Stimulates efficient translation and peptide-bond synthesis on native or reconstituted 70S ribosomes in vitro. Probably functions indirectly by altering the affinity of the ribosome for aminoacyl-tRNA, thus increasing their reactivity as acceptors for peptidyl transferase. The polypeptide is Elongation factor P 1 (Mesorhizobium japonicum (strain LMG 29417 / CECT 9101 / MAFF 303099) (Mesorhizobium loti (strain MAFF 303099))).